A 152-amino-acid polypeptide reads, in one-letter code: Ribosome maturation factor RimP (152 aa).

Belongs to the RimP family.

The protein localises to the cytoplasm. Required for maturation of 30S ribosomal subunits. In Porphyromonas gingivalis (strain ATCC BAA-308 / W83), this protein is Ribosome maturation factor RimP.